The primary structure comprises 243 residues: Protein canopy homolog 3 (243 aa).

The first 15 residues, 1–15, serve as a signal peptide directing secretion; the sequence is MWFLFLLLPLWAGCA. Positions 27 to 236 constitute a Saposin B-type domain; sequence SKCEVCKYVA…KEEKKQMDQP (210 aa). Disulfide bonds link Cys29-Cys188, Cys32-Cys176, and Cys86-Cys148. A coiled-coil region spans residues 136-160; that stretch reads ETSAEVADMKKQCDVMMENYEEVIE. Residues 186–243 are disordered; that stretch reads QSCLSEQGDSRKGDTGPSTGTKKQKKQGEKKNKSKKQNSGSKEEKKQMDQPMAAKEEL. The segment covering 226–243 has biased composition (basic and acidic residues); the sequence is SKEEKKQMDQPMAAKEEL.

It belongs to the canopy family.

The protein resides in the endoplasmic reticulum. In terms of biological role, toll-like receptor (TLR)-specific co-chaperone for HSP90B1. Required for proper TLR folding and hence controls TLR exit from the endoplasmic reticulum. Consequently, required for immune responses. This is Protein canopy homolog 3 (cnpy3) from Xenopus laevis (African clawed frog).